A 452-amino-acid polypeptide reads, in one-letter code: uncharacterized protein (452 aa).

Residues 3-61 (KVKIGEKYEVDITSMGHEGEGVGRIDGIAVFVKGALKGERVIVEIEEVHKNYLKGYTVK) form the TRAM domain. 4 residues coordinate [4Fe-4S] cluster: Cys-74, Cys-80, Cys-83, and Cys-160. S-adenosyl-L-methionine contacts are provided by Gln-284, Tyr-313, Glu-334, and Asp-382. The Nucleophile role is filled by Cys-409.

Belongs to the class I-like SAM-binding methyltransferase superfamily. RNA M5U methyltransferase family.

This is an uncharacterized protein from Caldanaerobacter subterraneus subsp. tengcongensis (strain DSM 15242 / JCM 11007 / NBRC 100824 / MB4) (Thermoanaerobacter tengcongensis).